The sequence spans 195 residues: AP-4-A phosphorylase (195 aa).

Over residues 1–17 (MSDEDRTDRATEDHTIF) the composition is skewed to basic and acidic residues. Residues 1-20 (MSDEDRTDRATEDHTIFDRG) form a disordered region. Positions 57–166 (PFTEIPQLSD…VPRWGGDANF (110 aa)) constitute an HIT domain. Residues 151-155 (HLHVH) carry the Histidine triad motif motif. The active-site Tele-AMP-histidine intermediate is histidine 153.

As to quaternary structure, homotetramer. A divalent metal cation is required as a cofactor.

The catalysed reaction is ADP + ATP + H(+) = P(1),P(4)-bis(5'-adenosyl) tetraphosphate + phosphate. Its function is as follows. Catabolizes diadenosine 5',5'''-P1,P4-tetraphosphate (Ap4A) into ADP and ATP. This is AP-4-A phosphorylase from Mycobacterium tuberculosis (strain CDC 1551 / Oshkosh).